The primary structure comprises 198 residues: Single-stranded DNA cytosine deaminase (198 aa).

Positions 1–30 (MDSLLMKQRKFLYHFKNVRWAKGRHETYLC) match the Bipartite nuclear localization signal motif. The interaction with SUPT6H stretch occupies residues 2–26 (DSLLMKQRKFLYHFKNVRWAKGRHE). One can recognise a CMP/dCMP-type deaminase domain in the interval 23–129 (GRHETYLCYV…KAEPEGLRRL (107 aa)). T27 carries the post-translational modification Phosphothreonine; by PKA. S38 is subject to Phosphoserine; by PKA. Residues 39–42 (ATSF) form an important for interaction with CTNNBL1 region. H56 is a binding site for Zn(2+). The active-site Proton donor is E58. Residues C87 and C90 each coordinate Zn(2+). Residues 88-116 (YDCARHVADFLRGYPNLSLRIFAARLYFC) are required for interaction with RNF126. The short motif at 183 to 198 (LYEVDDLRDAFRTLGL) is the Nuclear export signal element.

This sequence belongs to the cytidine and deoxycytidylate deaminase family. Interacts with CTNNBL1; the interaction is important for the immunoglobulin switch activity of AICDA. Interacts (via its NLS) with KPNA1. Interacts with PKA/PRKACA and PRKAR1A/PKR1. Interacts with SUPT6H, TRIM28 and NCL. Directly interacts with MCM3AP; this interaction may favor AICDA recruitment to immunoglobulin variable region genes, hence promoting somatic hypermutations. Zn(2+) serves as cofactor. Post-translationally, ser-38 is the major site whereas Thr-27 is the minor site of phosphorylation. Phosphorylation regulates its class-switch recombination activity. In terms of processing, probably monoubiquitinated on several residues by RNF126. As to expression, expressed in thymus, lung, spleen, kidney, small intestine, lymph node and tonsil.

The protein localises to the nucleus. It is found in the cytoplasm. The enzyme catalyses a 2'-deoxycytidine in single-stranded DNA + H2O + H(+) = a 2'-deoxyuridine in single-stranded DNA + NH4(+). In terms of biological role, single-stranded DNA-specific cytidine deaminase. Involved in somatic hypermutation (SHM), gene conversion, and class-switch recombination (CSR) in B-lymphocytes by deaminating C to U during transcription of Ig-variable (V) and Ig-switch (S) region DNA. Required for several crucial steps of B-cell terminal differentiation necessary for efficient antibody responses. May also play a role in the epigenetic regulation of gene expression by participating in DNA demethylation. In Canis lupus familiaris (Dog), this protein is Single-stranded DNA cytosine deaminase (AICDA).